Reading from the N-terminus, the 254-residue chain is Dihydroorotate dehydrogenase B (NAD(+)), electron transfer subunit (254 aa).

An FAD-binding FR-type domain is found at 1 to 99; it reads MLQTEMKVIQ…LGPLGKGFDI (99 aa). Residues 50 to 53, 67 to 69, and 74 to 75 each bind FAD; these read RPIS, LYR, and GT. Residues Cys-218, Cys-223, Cys-226, and Cys-241 each contribute to the [2Fe-2S] cluster site.

The protein belongs to the PyrK family. As to quaternary structure, heterotetramer of 2 PyrK and 2 PyrD type B subunits. Requires [2Fe-2S] cluster as cofactor. It depends on FAD as a cofactor.

It participates in pyrimidine metabolism; UMP biosynthesis via de novo pathway; orotate from (S)-dihydroorotate (NAD(+) route): step 1/1. Its function is as follows. Responsible for channeling the electrons from the oxidation of dihydroorotate from the FMN redox center in the PyrD type B subunit to the ultimate electron acceptor NAD(+). This Listeria monocytogenes serotype 4a (strain HCC23) protein is Dihydroorotate dehydrogenase B (NAD(+)), electron transfer subunit.